We begin with the raw amino-acid sequence, 436 residues long: Xylose isomerase (436 aa).

Mg(2+) is bound by residues Asp306 and Asp308.

Belongs to the xylose isomerase family. In terms of assembly, homotetramer. It depends on Mg(2+) as a cofactor.

The protein localises to the cytoplasm. It catalyses the reaction alpha-D-xylose = alpha-D-xylulofuranose. This Rhizobium rhizogenes (strain K84 / ATCC BAA-868) (Agrobacterium radiobacter) protein is Xylose isomerase.